Here is a 132-residue protein sequence, read N- to C-terminus: FPRL1 inhibitory protein (132 aa).

The signal sequence occupies residues 1–28; it reads MKKNITKVIIASTVIATGLLTQTNDAKA.

It belongs to the CHIPS/FLIPr family.

The protein resides in the secreted. Its function is as follows. May be involved in countering the first line of host defense mechanisms. Impairs the leukocyte response to FPRL1 agonists by binding directly to host FPRL1. In Staphylococcus aureus (strain MW2), this protein is FPRL1 inhibitory protein (flr).